A 240-amino-acid chain; its full sequence is tRNA (guanine-N(1)-)-methyltransferase (240 aa).

S-adenosyl-L-methionine-binding positions include G110 and 130–135; that span reads VGDYVL.

The protein belongs to the RNA methyltransferase TrmD family. As to quaternary structure, homodimer.

The protein resides in the cytoplasm. The enzyme catalyses guanosine(37) in tRNA + S-adenosyl-L-methionine = N(1)-methylguanosine(37) in tRNA + S-adenosyl-L-homocysteine + H(+). Functionally, specifically methylates guanosine-37 in various tRNAs. This chain is tRNA (guanine-N(1)-)-methyltransferase, found in Borrelia recurrentis (strain A1).